The chain runs to 534 residues: MTGAEEWKLSMGLEDTVPARLHEHGEASWTAERSHVCSIRQANDSAGALPVAGKPEPMARSLASAPVSPWHHMDRGSTTPAKARSHSASYHCPSSSQICVPGVGSPSAGYGDVPGASGHRPNLLSWPPALSRKESFLILTAHNRLRSRVHPPAANMQRMDWSESLAQLAEARAALCVTSVTPNLASTPGHNSHVGWNVQLMPMGSASFVEVVNLWFAEGLQYRHGDAECAHNATCAHYTQLVWATSSQLGCGRQPCFVDQEAMEAFVCAYSPGGNWDINGKTVAPYKKGTWCSLCTARVSGCFKAWDHAGGLCEVPRNPCRMSCRNLGHLNISTCRCHCQPGYTGRYCQVRCSVQCVHGQFRKEECSCICDVGYGGAQCATKVGFPFHTCDLRIDGDCFMVSPEADTYYGAKMKCQGKGGVLAQIESQKVQDILAFYLGRLETTNEVTDSDFETKNFWIGLTYKAAKDSFRWTTGEHQSFTSFAFGQPDNQGFGNCVEMQASAAFNWNDQRCKTRNRYICQFAQKHYSRWEPGP.

The interval 47-88 (GALPVAGKPEPMARSLASAPVSPWHHMDRGSTTPAKARSHSA) is disordered. The SCP domain maps to 139–270 (LTAHNRLRSR…EAMEAFVCAY (132 aa)). An EGF-like domain is found at 316–349 (PRNPCRMSCRNLGHLNISTCRCHCQPGYTGRYCQ). 4 disulfide bridges follow: Cys-324/Cys-337, Cys-339/Cys-348, Cys-415/Cys-520, and Cys-496/Cys-512. The C-type lectin domain occupies 394-521 (IDGDCFMVSP…CKTRNRYICQ (128 aa)).

The protein localises to the secreted. This chain is C-type lectin domain family 18 member A (Clec18a), found in Mus musculus (Mouse).